The sequence spans 901 residues: Protein translocase subunit SecA (901 aa).

ATP-binding positions include glutamine 87, 105–109 (GEGKT), and aspartate 512. The tract at residues 868–901 (AALAAQTGERKVGRNDPCPCGSGKKYKQCHGRLQ) is disordered. 4 residues coordinate Zn(2+): cysteine 885, cysteine 887, cysteine 896, and histidine 897. The span at 891-901 (KKYKQCHGRLQ) shows a compositional bias: basic residues.

This sequence belongs to the SecA family. In terms of assembly, monomer and homodimer. Part of the essential Sec protein translocation apparatus which comprises SecA, SecYEG and auxiliary proteins SecDF-YajC and YidC. It depends on Zn(2+) as a cofactor.

It localises to the cell inner membrane. Its subcellular location is the cytoplasm. It carries out the reaction ATP + H2O + cellular proteinSide 1 = ADP + phosphate + cellular proteinSide 2.. In terms of biological role, part of the Sec protein translocase complex. Interacts with the SecYEG preprotein conducting channel. Has a central role in coupling the hydrolysis of ATP to the transfer of proteins into and across the cell membrane, serving both as a receptor for the preprotein-SecB complex and as an ATP-driven molecular motor driving the stepwise translocation of polypeptide chains across the membrane. In Escherichia coli O45:K1 (strain S88 / ExPEC), this protein is Protein translocase subunit SecA.